Reading from the N-terminus, the 834-residue chain is Translation factor GUF1 homolog, mitochondrial (834 aa).

The N-terminal 66 residues, 1 to 66, are a transit peptide targeting the mitochondrion; it reads MKLCGVRSSG…RPLLAEPRRY (66 aa). Residues 129 to 314 form the tr-type G domain; it reads ACIRNVSVVA…HIIDKVPPPC (186 aa). Residues 138–145, 205–209, and 259–262 each bind GTP; these read AHVDHGKT, DTPGH, and TKMD. Disordered stretches follow at residues 363–385 and 476–507; these read GAASAPVSTASSVSSGTAPASGG and TGSPATASRTKPATAAETASSDDASGSGSSSV. The segment covering 488–507 has biased composition (low complexity); the sequence is ATAAETASSDDASGSGSSSV.

The protein belongs to the TRAFAC class translation factor GTPase superfamily. Classic translation factor GTPase family. LepA subfamily.

The protein resides in the mitochondrion inner membrane. It carries out the reaction GTP + H2O = GDP + phosphate + H(+). Promotes mitochondrial protein synthesis. May act as a fidelity factor of the translation reaction, by catalyzing a one-codon backward translocation of tRNAs on improperly translocated ribosomes. Binds to mitochondrial ribosomes in a GTP-dependent manner. The sequence is that of Translation factor GUF1 homolog, mitochondrial from Leishmania infantum.